We begin with the raw amino-acid sequence, 184 residues long: Probable RNA 2'-phosphotransferase (184 aa).

Belongs to the KptA/TPT1 family.

Functionally, removes the 2'-phosphate from RNA via an intermediate in which the phosphate is ADP-ribosylated by NAD followed by a presumed transesterification to release the RNA and generate ADP-ribose 1''-2''-cyclic phosphate (APPR&gt;P). May function as an ADP-ribosylase. The protein is Probable RNA 2'-phosphotransferase of Escherichia coli O139:H28 (strain E24377A / ETEC).